Consider the following 843-residue polypeptide: Protein P (843 aa).

Residues 1 to 177 (MPLSYQHFRK…FCGSPYSWEQ (177 aa)) form a terminal protein domain (TP) region. Residues 178-346 (DLQHGRLVFQ…YCLSHIVNLI (169 aa)) form a spacer region. The disordered stretch occupies residues 219–269 (RKSRLGPQPAQGQLAGRQQGGSGSIRARVHPSPWGTVGVEPSGSGPTHNCA). Over residues 223–235 (LGPQPAQGQLAGR) the composition is skewed to low complexity. The interval 347–690 (EDWGPCTEHG…YLNLYPVARQ (344 aa)) is polymerase/reverse transcriptase domain (RT). The region spanning 357 to 600 (EHRIRTPRTP…YSLNFMGYVI (244 aa)) is the Reverse transcriptase domain. The Mg(2+) site is built by aspartate 429, aspartate 551, and aspartate 552.

The protein belongs to the hepadnaviridae P protein family.

The catalysed reaction is DNA(n) + a 2'-deoxyribonucleoside 5'-triphosphate = DNA(n+1) + diphosphate. It catalyses the reaction Endonucleolytic cleavage to 5'-phosphomonoester.. With respect to regulation, activated by host HSP70 and HSP40 in vitro to be able to bind the epsilon loop of the pgRNA. Because deletion of the RNase H region renders the protein partly chaperone-independent, the chaperones may be needed indirectly to relieve occlusion of the RNA-binding site by this domain. Inhibited by several reverse-transcriptase inhibitors: Lamivudine, Adefovir and Entecavir. Its function is as follows. Multifunctional enzyme that converts the viral RNA genome into dsDNA in viral cytoplasmic capsids. This enzyme displays a DNA polymerase activity that can copy either DNA or RNA templates, and a ribonuclease H (RNase H) activity that cleaves the RNA strand of RNA-DNA heteroduplexes in a partially processive 3'- to 5'-endonucleasic mode. Neo-synthesized pregenomic RNA (pgRNA) are encapsidated together with the P protein, and reverse-transcribed inside the nucleocapsid. Initiation of reverse-transcription occurs first by binding the epsilon loop on the pgRNA genome, and is initiated by protein priming, thereby the 5'-end of (-)DNA is covalently linked to P protein. Partial (+)DNA is synthesized from the (-)DNA template and generates the relaxed circular DNA (RC-DNA) genome. After budding and infection, the RC-DNA migrates in the nucleus, and is converted into a plasmid-like covalently closed circular DNA (cccDNA). The activity of P protein does not seem to be necessary for cccDNA generation, and is presumably released from (+)DNA by host nuclear DNA repair machinery. The polypeptide is Protein P (Hepatitis B virus genotype B2 subtype adw (isolate China/patient4/1996) (HBV-B)).